Here is a 492-residue protein sequence, read N- to C-terminus: Regulatory protein ViaA (492 aa).

This sequence belongs to the ViaA family. As to quaternary structure, homodimer. Interacts with RavA.

It is found in the cytoplasm. Functionally, component of the RavA-ViaA chaperone complex, which may act on the membrane to optimize the function of some of the respiratory chains. ViaA stimulates the ATPase activity of RavA. The polypeptide is Regulatory protein ViaA (Pectobacterium atrosepticum (strain SCRI 1043 / ATCC BAA-672) (Erwinia carotovora subsp. atroseptica)).